Consider the following 566-residue polypeptide: Glucose starvation modulator protein 1 (566 aa).

The zn(2)-C6 fungal-type DNA-binding region spans 20 to 48 (CVFCHQKHLQCSNERPCKNCVKRNIAHGC). Disordered stretches follow at residues 63–92 (GVPGAVSNKQSTPRKKLKTSPVSTSVSPMD) and 250–270 (KQASPSPSNTSTSENNTNTLS). Over residues 253-270 (SPSPSNTSTSENNTNTLS) the composition is skewed to low complexity.

This sequence belongs to the ERT1/acuK family.

The protein resides in the nucleus. In terms of biological role, transcription factor which regulates nonfermentable carbon utilization. This Candida albicans (strain WO-1) (Yeast) protein is Glucose starvation modulator protein 1 (GSM1).